Consider the following 373-residue polypeptide: MTQPIVRSIPLHVVSNDHPSSSPLQPGVKQSGEDKIGRSPVQFADVPVLRKPSWIRVRIPSGNAVQSLKAKLRENRLVTVCEEAACPNIHECFSHGTATFMILGEVCTRRCSFCDVAHGRPKPPDPEEPISLARTVAEMGLKYVVVTSVDRDDLRDGGAQHFVDCIAAIRQSAPQTRIEILTPDFRGKGRMDRALDILAACPPDVFNHNVETVPALYPNVRPGADYQWSLTLLKRFKAQHPQVPTKSGIMLGLGETLDQVQATLRDLRAHDVDMVTVGQYLQPTSHHHPVLRYWTPDEYKALEEYGMALGFSHVASGPMVRSSYHADHQAKEAGLGFNATVSLGSPAVSSTEHRERHTIASKSASKTESIPHR.

Residues 12 to 36 (HVVSNDHPSSSPLQPGVKQSGEDKI) are disordered. Positions 81, 86, 92, 107, 111, 114, and 323 each coordinate [4Fe-4S] cluster. The region spanning 93-312 (FSHGTATFMI…EEYGMALGFS (220 aa)) is the Radical SAM core domain. Residues 346–373 (PAVSSTEHRERHTIASKSASKTESIPHR) are disordered. Positions 360–373 (ASKSASKTESIPHR) are enriched in polar residues.

It belongs to the radical SAM superfamily. Lipoyl synthase family. [4Fe-4S] cluster is required as a cofactor.

It localises to the cytoplasm. The catalysed reaction is [[Fe-S] cluster scaffold protein carrying a second [4Fe-4S](2+) cluster] + N(6)-octanoyl-L-lysyl-[protein] + 2 oxidized [2Fe-2S]-[ferredoxin] + 2 S-adenosyl-L-methionine + 4 H(+) = [[Fe-S] cluster scaffold protein] + N(6)-[(R)-dihydrolipoyl]-L-lysyl-[protein] + 4 Fe(3+) + 2 hydrogen sulfide + 2 5'-deoxyadenosine + 2 L-methionine + 2 reduced [2Fe-2S]-[ferredoxin]. The protein operates within protein modification; protein lipoylation via endogenous pathway; protein N(6)-(lipoyl)lysine from octanoyl-[acyl-carrier-protein]: step 2/2. Functionally, catalyzes the radical-mediated insertion of two sulfur atoms into the C-6 and C-8 positions of the octanoyl moiety bound to the lipoyl domains of lipoate-dependent enzymes, thereby converting the octanoylated domains into lipoylated derivatives. This chain is Lipoyl synthase, found in Xylella fastidiosa (strain M12).